Reading from the N-terminus, the 197-residue chain is Histidine biosynthesis bifunctional protein HisIE (197 aa).

The segment at 1-108 is phosphoribosyl-AMP cyclohydrolase; the sequence is MMTLYPVVVQ…RFEETGSPTF (108 aa). The phosphoribosyl-ATP pyrophosphohydrolase stretch occupies residues 109 to 197; sequence WLELYRLVRK…VMRELEKRRK (89 aa).

In the N-terminal section; belongs to the PRA-CH family. It in the C-terminal section; belongs to the PRA-PH family.

The protein localises to the cytoplasm. It carries out the reaction 1-(5-phospho-beta-D-ribosyl)-ATP + H2O = 1-(5-phospho-beta-D-ribosyl)-5'-AMP + diphosphate + H(+). It catalyses the reaction 1-(5-phospho-beta-D-ribosyl)-5'-AMP + H2O = 1-(5-phospho-beta-D-ribosyl)-5-[(5-phospho-beta-D-ribosylamino)methylideneamino]imidazole-4-carboxamide. It functions in the pathway amino-acid biosynthesis; L-histidine biosynthesis; L-histidine from 5-phospho-alpha-D-ribose 1-diphosphate: step 2/9. The protein operates within amino-acid biosynthesis; L-histidine biosynthesis; L-histidine from 5-phospho-alpha-D-ribose 1-diphosphate: step 3/9. In Thermotoga maritima (strain ATCC 43589 / DSM 3109 / JCM 10099 / NBRC 100826 / MSB8), this protein is Histidine biosynthesis bifunctional protein HisIE (hisI).